The chain runs to 192 residues: Probable molybdenum cofactor guanylyltransferase (192 aa).

GTP-binding positions include 8-10 (LAG), Lys20, Asp69, and Asp94. Mg(2+) is bound at residue Asp94.

This sequence belongs to the MobA family. Requires Mg(2+) as cofactor.

The protein localises to the cytoplasm. It catalyses the reaction Mo-molybdopterin + GTP + H(+) = Mo-molybdopterin guanine dinucleotide + diphosphate. In terms of biological role, transfers a GMP moiety from GTP to Mo-molybdopterin (Mo-MPT) cofactor (Moco or molybdenum cofactor) to form Mo-molybdopterin guanine dinucleotide (Mo-MGD) cofactor. This is Probable molybdenum cofactor guanylyltransferase from Pyrococcus horikoshii (strain ATCC 700860 / DSM 12428 / JCM 9974 / NBRC 100139 / OT-3).